The primary structure comprises 420 residues: Histidine--tRNA ligase (420 aa).

It belongs to the class-II aminoacyl-tRNA synthetase family. As to quaternary structure, homodimer.

It localises to the cytoplasm. The enzyme catalyses tRNA(His) + L-histidine + ATP = L-histidyl-tRNA(His) + AMP + diphosphate + H(+). This Staphylococcus saprophyticus subsp. saprophyticus (strain ATCC 15305 / DSM 20229 / NCIMB 8711 / NCTC 7292 / S-41) protein is Histidine--tRNA ligase.